The following is a 312-amino-acid chain: Gamma-soluble NSF attachment protein (312 aa).

Positions 281-312 (KKKSPATPQAKPDGVTATAADEEEDEYSGGLC) are disordered. At S284 the chain carries Phosphoserine. At T287 the chain carries Phosphothreonine. A compositionally biased stretch (acidic residues) spans 300–312 (ADEEEDEYSGGLC). At S308 the chain carries Phosphoserine.

The protein belongs to the SNAP family. Interacts with RAB11FIP5. Interacts with VTI1A.

The protein localises to the membrane. It localises to the golgi apparatus. Required for vesicular transport between the endoplasmic reticulum and the Golgi apparatus. The protein is Gamma-soluble NSF attachment protein of Homo sapiens (Human).